The chain runs to 212 residues: Large ribosomal subunit protein uL3 (212 aa).

The interval 119–147 is disordered; the sequence is YQGNIKRWGQSRGPETHGSRYHRIPGSMG.

Belongs to the universal ribosomal protein uL3 family. In terms of assembly, part of the 50S ribosomal subunit. Forms a cluster with proteins L14 and L19.

Its function is as follows. One of the primary rRNA binding proteins, it binds directly near the 3'-end of the 23S rRNA, where it nucleates assembly of the 50S subunit. This Lactobacillus acidophilus (strain ATCC 700396 / NCK56 / N2 / NCFM) protein is Large ribosomal subunit protein uL3.